The primary structure comprises 451 residues: uncharacterized protein (451 aa).

The next 11 helical transmembrane spans lie at 13-33 (IGFV…WKFP), 41-61 (GGAF…PLLV), 97-117 (ACFL…LYIV), 142-162 (NPVQ…LVVA), 174-194 (AVMM…SLTL), 217-237 (ILFA…VMVT), 255-275 (IVLM…PAVF), 299-319 (LPFG…AALT), 345-365 (WTSG…YGVL), 381-401 (FTVS…FIPL), and 429-449 (LLRF…IGIL).

This sequence belongs to the sodium:neurotransmitter symporter (SNF) (TC 2.A.22) family.

It localises to the cell membrane. Its function is as follows. Putative sodium-dependent transporter. This is an uncharacterized protein from Bacillus subtilis (strain 168).